A 505-amino-acid polypeptide reads, in one-letter code: Trans-cinnamate 4-monooxygenase (505 aa).

A helical membrane pass occupies residues 3–23; sequence LLLLEKTLLALFLAAITAITI. Residues 213 to 218 and Ala-306 contribute to the (E)-cinnamate site; that span reads RSRLAQ. Position 447 (Cys-447) interacts with heme.

This sequence belongs to the cytochrome P450 family. Heme serves as cofactor.

It is found in the membrane. The catalysed reaction is (E)-cinnamate + reduced [NADPH--hemoprotein reductase] + O2 = (E)-4-coumarate + oxidized [NADPH--hemoprotein reductase] + H2O + H(+). Its pathway is phenylpropanoid metabolism; trans-4-coumarate biosynthesis; trans-4-coumarate from trans-cinnamate: step 1/1. Catalyzes the first oxidative step of the phenylpropanoid pathway in higher plants by transforming trans-cinnamate into p-coumarate. The compounds formed by this pathway are essential components for lignification, pollination, and defense against ultraviolet light, predators and pathogens. This Pisum sativum (Garden pea) protein is Trans-cinnamate 4-monooxygenase (CYP73A9).